We begin with the raw amino-acid sequence, 272 residues long: Probable ribonuclease HI_0526 (272 aa).

Positions 1-23 (MKKLTSILSLIVLVILAIWQYFT) are cleaved as a signal peptide. Residues H148, E195, and H199 contribute to the active site.

It belongs to the RNase T2 family.

In Haemophilus influenzae (strain ATCC 51907 / DSM 11121 / KW20 / Rd), this protein is Probable ribonuclease HI_0526.